The following is a 117-amino-acid chain: Large ribosomal subunit protein bL20 (117 aa).

Belongs to the bacterial ribosomal protein bL20 family.

Its function is as follows. Binds directly to 23S ribosomal RNA and is necessary for the in vitro assembly process of the 50S ribosomal subunit. It is not involved in the protein synthesizing functions of that subunit. This is Large ribosomal subunit protein bL20 from Marinobacter nauticus (strain ATCC 700491 / DSM 11845 / VT8) (Marinobacter aquaeolei).